Consider the following 179-residue polypeptide: Translation initiation factor IF-3 (179 aa).

It belongs to the IF-3 family. In terms of assembly, monomer.

It is found in the cytoplasm. Functionally, IF-3 binds to the 30S ribosomal subunit and shifts the equilibrium between 70S ribosomes and their 50S and 30S subunits in favor of the free subunits, thus enhancing the availability of 30S subunits on which protein synthesis initiation begins. The sequence is that of Translation initiation factor IF-3 from Buchnera aphidicola subsp. Acyrthosiphon pisum (strain APS) (Acyrthosiphon pisum symbiotic bacterium).